A 3707-amino-acid chain; its full sequence is Basement membrane-specific heparan sulfate proteoglycan core protein (3707 aa).

The signal sequence occupies residues 1-21; that stretch reads MGQRAVGSLLLGLLLHARLLA. S65, S71, and S76 each carry an O-linked (Xyl...) (heparan sulfate) serine glycan. The region spanning 80 to 191 is the SEA domain; that stretch reads QMVYFRALVN…WGFKFRRLGT (112 aa). Residue N89 is glycosylated (N-linked (GlcNAc...) asparagine). LDL-receptor class A domains are found at residues 195–234, 281–319, 320–359, and 360–403; these read FPRV…ELNC, GPSA…ELGC, ASPP…EANC, and SVKQ…EFGC. Disulfide bonds link C199-C212, C206-C225, C219-C234, C285-C297, C292-C310, C304-C319, C325-C337, C332-C350, C344-C359, C368-C381, C375-C394, C388-C403, and C428-C479. The N-linked (GlcNAc...) asparagine glycan is linked to N358. Residues 404–504 form the Ig-like C2-type 1 domain; sequence MPPQVVTPPQ…VLELVPQRGP (101 aa). The Laminin EGF-like 1; first part domain maps to 521–530; sequence CFCFGVTNVC. A Laminin IV type A 1 domain is found at 538–730; sequence DQIRLSFDQP…IHGRAHSVEE (193 aa). N554 carries an N-linked (GlcNAc...) asparagine glycan. The Laminin EGF-like 1; second part domain occupies 731–763; that stretch reads CRCPIGYSGLSCESCDAHFTRVPGGPYLGTCSG. Cystine bridges form between C764–C773, C766–C780, C783–C792, C795–C811, C814–C829, C816–C839, C842–C851, C854–C869, C879–C892, C894–C903, and C906–C921. Laminin EGF-like domains are found at residues 764 to 813 and 814 to 871; these read CNCN…ACRP and CPCP…KCRP. Residues 879–923 enclose the Laminin EGF-like 4; truncated domain; the sequence is CDERGSLGTSGETCRCKNNVVGRLCNECSDGSFHLSKQNPDGCLK. A Laminin EGF-like 5; first part domain is found at 924-933; that stretch reads CFCMGVSRQC. One can recognise a Laminin IV type A 2 domain in the interval 941–1125; sequence AQVLGASEQP…GQDSAREVEQ (185 aa). The Laminin EGF-like 5; second part domain maps to 1126–1158; the sequence is CTCPPGYRGPSCQDCDTGYTRVPSGLYLGTCER. Disulfide bonds link C1159-C1168, C1161-C1175, C1178-C1187, C1190-C1206, C1209-C1224, C1211-C1234, C1237-C1246, C1249-C1263, C1275-C1287, C1277-C1293, C1295-C1304, and C1307-C1322. 3 Laminin EGF-like domains span residues 1159–1208, 1209–1265, and 1275–1324; these read CNCH…DCQP, CPCY…PCHR, and CGCD…GCLP. Positions 1325–1334 constitute a Laminin EGF-like 9; first part domain; sequence CFCMGVTQQC. Positions 1344-1529 constitute a Laminin IV type A 3 domain; the sequence is ISTHFAPGDF…SGPRALEVEE (186 aa). The 33-residue stretch at 1530 to 1562 folds into the Laminin EGF-like 9; second part domain; sequence CRCPPGYVGLSCQDCAPGYTRTGSGLYLGQCEL. Intrachain disulfides connect C1563–C1572, C1565–C1579, C1582–C1591, C1594–C1610, C1613–C1628, C1615–C1638, C1641–C1650, and C1653–C1668. Laminin EGF-like domains lie at 1563-1612 and 1613-1670; these read CECN…DCQP and CACP…RCQP. Ig-like C2-type domains follow at residues 1677 to 1771, 1772 to 1865, 1866 to 1954, 1955 to 2049, 2050 to 2148, 2149 to 2244, 2245 to 2343, 2344 to 2436, 2437 to 2532, 2533 to 2619, 2620 to 2720, 2721 to 2809, 2810 to 2895, and 2896 to 2980; these read EVQI…KPIM, VTVE…STAP, VASI…GGSG, PRVQ…PAPA, SPAP…PGVV, PPIR…PAPG, LAQP…RLRS, PVIS…PPTV, SVLP…APGT, PQVQ…VESP, PYAT…GGST, PTVQ…ALPS, VLIN…LVQA, and LPQI…LQVP. Residues 1713–1733 are disordered; sequence DGRPLPSSAQQRHQGSELHFP. 3 disulfides stabilise this stretch: C1792/C1839, C1886/C1932, and C1976/C2021. Residues 2039 to 2061 form a disordered region; sequence SPSTNSPPAPASPAPIRIESSSS. Residues 2052–2061 show a composition bias toward low complexity; the sequence is APIRIESSSS. 3 disulfides stabilise this stretch: C2073-C2118, C2170-C2215, and C2268-C2313. Residues N2336, N2394, and N2427 are each glycosylated (N-linked (GlcNAc...) asparagine). An intrachain disulfide couples C2365 to C2413. Intrachain disulfides connect C2456/C2506 and C2554/C2599. A glycan (N-linked (GlcNAc...) asparagine) is linked at N2600. The cysteines at positions 2641 and 2686 are disulfide-linked. Intrachain disulfides connect C2831-C2876 and C2917-C2962. The Laminin G-like 1 domain occupies 2984-3162; the sequence is IPYFTQTPYS…VNLTTHGISH (179 aa). N-linked (GlcNAc...) asparagine glycans are attached at residues N3098 and N3154. Cystine bridges form between C3137–C3163, C3166–C3177, C3171–C3187, C3204–C3216, and C3229–C3238. The EGF-like domain occupies 3163–3241; that stretch reads CPTCQDRPCQ…GRSGVRCEEG (79 aa). The Laminin G-like 2 domain occupies 3245–3425; that stretch reads TTPSMSGAGS…VGQCYDSSPC (181 aa). N3385 carries an N-linked (GlcNAc...) asparagine glycan. 7 cysteine pairs are disulfide-bonded: C3393–C3419, C3425–C3436, C3430–C3446, C3448–C3457, C3464–C3476, C3470–C3481, and C3483–C3492. S3510 carries O-linked (Xyl...) (chondroitin sulfate) serine glycosylation. Positions 3518 to 3705 constitute a Laminin G-like 3 domain; sequence QYGAYFYDNG…AQAGANTRPC (188 aa). Positions 3574 and 3591 each coordinate Ca(2+). Residues 3615-3617 form a mediates motor neuron attachment region; sequence LRE. 2 residues coordinate Ca(2+): A3641 and N3643. Residues C3671 and C3705 are joined by a disulfide bond. The tract at residues 3680 to 3707 is disordered; sequence ARPGAPPPQPLDLQHRAQAGANTRPCPS.

In terms of assembly, has a strong tendency to aggregate in dimers or stellate structures. Interacts with other basement membrane components such as laminin, prolargin and collagen type IV. Interacts with COL13A1. Interacts with FGFBP1. Interacts with VWA1. Interacts (via C-terminus) with ECM1 (via C-terminus). Interacts with SVEP1. Proteolytic processing produces the C-terminal angiogenic peptide, endorepellin. This peptide can be further processed to produce the LG3 peptide. Post-translationally, O-glycosylated. Contains three heparan sulfate chains. Also contains chondroitin sulfate.

It is found in the secreted. The protein localises to the extracellular space. It localises to the extracellular matrix. The protein resides in the basement membrane. Its function is as follows. Integral component of basement membranes. Component of the glomerular basement membrane (GBM), responsible for the fixed negative electrostatic membrane charge, and which provides a barrier which is both size- and charge-selective. It serves as an attachment substrate for cells. Plays essential roles in vascularization. Critical for normal heart development and for regulating the vascular response to injury. Also required for avascular cartilage development. In terms of biological role, anti-angiogenic and anti-tumor peptide that inhibits endothelial cell migration, collagen-induced endothelial tube morphogenesis and blood vessel growth in the chorioallantoic membrane. Blocks endothelial cell adhesion to fibronectin and type I collagen. Anti-tumor agent in neovascularization. Interaction with its ligand, integrin alpha2/beta1, is required for the anti-angiogenic properties. Evokes a reduction in phosphorylation of receptor tyrosine kinases via alpha2/beta1 integrin-mediated activation of the tyrosine phosphatase, PTPN6. Has anti-angiogenic properties that require binding of calcium ions for full activity. This Mus musculus (Mouse) protein is Basement membrane-specific heparan sulfate proteoglycan core protein (Hspg2).